A 362-amino-acid polypeptide reads, in one-letter code: uncharacterized protein (362 aa).

The protein belongs to the carbohydrate kinase PfkB family.

This is an uncharacterized protein from Escherichia coli (strain K12).